We begin with the raw amino-acid sequence, 292 residues long: Cyclin-dependent kinase 5 (292 aa).

In terms of domain architecture, Protein kinase spans 4 to 286; it reads YEKLEKIGEG…AEEALQHPYF (283 aa). Residues 10–18 and Lys33 each bind ATP; that span reads IGEGTYGTV. Residue Tyr15 is modified to Phosphotyrosine; by ABL1, EPHA4 and FYN. At Thr17 the chain carries Phosphothreonine. Position 56 is an N6-acetyllysine (Lys56). Ser72 is subject to Phosphoserine. Catalysis depends on Asp126, which acts as the Proton acceptor. Ser159 bears the Phosphoserine mark.

It belongs to the protein kinase superfamily. CMGC Ser/Thr protein kinase family. CDC2/CDKX subfamily. Heterodimer composed of a catalytic subunit CDK5 and a regulatory subunit CDK5R1 (p25) and macromolecular complex composed of at least CDK5, CDK5R1 (p35) and CDK5RAP1 or CDK5RAP2 or CDK5RAP3. Only the heterodimer shows kinase activity. Under neurotoxic stress and neuronal injury conditions, p35 is cleaved by calpain to generate p25 that hyperactivates CDK5, that becomes functionally disabled and often toxic. Found in a trimolecular complex with CABLES1 and ABL1. Interacts with CABLES1 and CABLES2. Interacts with AATK and GSTP1. Binds to HDAC1 when in complex with p25. Interaction with myristoylation p35 promotes CDK5 association with membranes. Both isoforms 1 and 2 interacts with beta-catenin/CTNNB1. Interacts with delta-catenin/CTNND2 and APEX1. Interacts with P53/TP53 in neurons. Interacts with EPHA4; may mediate the activation of NGEF by EPHA4. Interacts with PTK2/FAK1. The complex p35/CDK5 interacts with CLOCK. Phosphorylation on Tyr-15 by ABL1 and FYN, and on Ser-159 by casein kinase 1 promotes kinase activity. By contrast, phosphorylation at Thr-14 inhibits activity. In terms of processing, phosphorylation at Ser-159 is essential for maximal catalytic activity.

Its subcellular location is the nucleus. The protein resides in the cytoplasm. It localises to the cell membrane. The protein localises to the perikaryon. It is found in the cell projection. Its subcellular location is the lamellipodium. The protein resides in the growth cone. It localises to the postsynaptic density. The protein localises to the synapse. It catalyses the reaction L-seryl-[protein] + ATP = O-phospho-L-seryl-[protein] + ADP + H(+). The enzyme catalyses L-threonyl-[protein] + ATP = O-phospho-L-threonyl-[protein] + ADP + H(+). Inhibited by 2-(1-ethyl-2-hydroxyethylamino)-6-benzylamino-9-isopropylpurine (roscovitine), 1-isopropyl-4-aminobenzyl-6-ether-linked benzimidazoles, resveratrol, AT-7519 and olomoucine. Activated by CDK5R1 (p35) and CDK5R2 (p39) during the development of the nervous system; degradation of CDK5R1 (p35) and CDK5R2 (p39) by proteasome result in down regulation of kinase activity, during this process, CDK5 phosphorylates p35 and induces its ubiquitination and subsequent degradation. Kinase activity is mainly determined by the amount of p35 available and subcellular location; reversible association to plasma membrane inhibits activity. Long-term inactivation as well as CDK5R1 (p25)-mediated hyperactivation of CDK5 triggers cell death. The pro-death activity of hyperactivated CDK5 is suppressed by membrane association of CDK5, via myristoylation of p35. Brain-derived neurotrophic factor, glial-derived neurotrophic factor, nerve growth factor (NGF), retinoic acid, laminin and neuregulin promote activity. Neurotoxicity enhances nuclear activity, thus leading to MEF2 phosphorylation and inhibition prior to apoptosis of cortical neurons. Repression by GSTP1 via p25/p35 translocation prevents neurodegeneration. In terms of biological role, proline-directed serine/threonine-protein kinase essential for neuronal cell cycle arrest and differentiation and may be involved in apoptotic cell death in neuronal diseases by triggering abortive cell cycle re-entry. Interacts with D1 and D3-type G1 cyclins. Phosphorylates SRC, NOS3, VIM/vimentin, p35/CDK5R1, MEF2A, SIPA1L1, SH3GLB1, PXN, PAK1, MCAM/MUC18, SEPT5, SYN1, DNM1, AMPH, SYNJ1, CDK16, RAC1, RHOA, CDC42, TONEBP/NFAT5, MAPT/TAU, MAP1B, histone H1, p53/TP53, HDAC1, APEX1, PTK2/FAK1, huntingtin/HTT, ATM, MAP2, NEFH and NEFM. Regulates several neuronal development and physiological processes including neuronal survival, migration and differentiation, axonal and neurite growth, synaptogenesis, oligodendrocyte differentiation, synaptic plasticity and neurotransmission, by phosphorylating key proteins. Negatively regulates the CACNA1B/CAV2.2 -mediated Ca(2+) release probability at hippocampal neuronal soma and synaptic terminals. Activated by interaction with CDK5R1 (p35) and CDK5R2 (p39), especially in postmitotic neurons, and promotes CDK5R1 (p35) expression in an autostimulation loop. Phosphorylates many downstream substrates such as Rho and Ras family small GTPases (e.g. PAK1, RAC1, RHOA, CDC42) or microtubule-binding proteins (e.g. MAPT/TAU, MAP2, MAP1B), and modulates actin dynamics to regulate neurite growth and/or spine morphogenesis. Also phosphorylates exocytosis associated proteins such as MCAM/MUC18, SEPT5, SYN1, and CDK16/PCTAIRE1 as well as endocytosis associated proteins such as DNM1, AMPH and SYNJ1 at synaptic terminals. In the mature central nervous system (CNS), regulates neurotransmitter movements by phosphorylating substrates associated with neurotransmitter release and synapse plasticity; synaptic vesicle exocytosis, vesicles fusion with the presynaptic membrane, and endocytosis. Promotes cell survival by activating anti-apoptotic proteins BCL2 and STAT3, and negatively regulating of JNK3/MAPK10 activity. Phosphorylation of p53/TP53 in response to genotoxic and oxidative stresses enhances its stabilization by preventing ubiquitin ligase-mediated proteasomal degradation, and induces transactivation of p53/TP53 target genes, thus regulating apoptosis. Phosphorylation of p35/CDK5R1 enhances its stabilization by preventing calpain-mediated proteolysis producing p25/CDK5R1 and avoiding ubiquitin ligase-mediated proteasomal degradation. During aberrant cell-cycle activity and DNA damage, p25/CDK5 activity elicits cell-cycle activity and double-strand DNA breaks that precedes neuronal death by deregulating HDAC1. DNA damage triggered phosphorylation of huntingtin/HTT in nuclei of neurons protects neurons against polyglutamine expansion as well as DNA damage mediated toxicity. Phosphorylation of PXN reduces its interaction with PTK2/FAK1 in matrix-cell focal adhesions (MCFA) during oligodendrocytes (OLs) differentiation. Negative regulator of Wnt/beta-catenin signaling pathway. Activator of the GAIT (IFN-gamma-activated inhibitor of translation) pathway, which suppresses expression of a post-transcriptional regulon of proinflammatory genes in myeloid cells; phosphorylates the linker domain of glutamyl-prolyl tRNA synthetase (EPRS) in a IFN-gamma-dependent manner, the initial event in assembly of the GAIT complex. Phosphorylation of SH3GLB1 is required for autophagy induction in starved neurons. Phosphorylation of TONEBP/NFAT5 in response to osmotic stress mediates its rapid nuclear localization. MEF2 is inactivated by phosphorylation in nucleus in response to neurotoxin, thus leading to neuronal apoptosis. APEX1 AP-endodeoxyribonuclease is repressed by phosphorylation, resulting in accumulation of DNA damage and contributing to neuronal death. NOS3 phosphorylation down regulates NOS3-derived nitrite (NO) levels. SRC phosphorylation mediates its ubiquitin-dependent degradation and thus leads to cytoskeletal reorganization. May regulate endothelial cell migration and angiogenesis via the modulation of lamellipodia formation. Involved in dendritic spine morphogenesis by mediating the EFNA1-EPHA4 signaling. The complex p35/CDK5 participates in the regulation of the circadian clock by modulating the function of CLOCK protein: phosphorylates CLOCK at 'Thr-451' and 'Thr-461' and regulates the transcriptional activity of the CLOCK-BMAL1 heterodimer in association with altered stability and subcellular distribution. This chain is Cyclin-dependent kinase 5, found in Bos taurus (Bovine).